Reading from the N-terminus, the 156-residue chain is Small ribosomal subunit protein uS7 (156 aa).

It belongs to the universal ribosomal protein uS7 family. In terms of assembly, part of the 30S ribosomal subunit. Contacts proteins S9 and S11.

In terms of biological role, one of the primary rRNA binding proteins, it binds directly to 16S rRNA where it nucleates assembly of the head domain of the 30S subunit. Is located at the subunit interface close to the decoding center, probably blocks exit of the E-site tRNA. The chain is Small ribosomal subunit protein uS7 from Saccharophagus degradans (strain 2-40 / ATCC 43961 / DSM 17024).